Here is a 569-residue protein sequence, read N- to C-terminus: Dihydroorotate dehydrogenase (quinone), mitochondrial (569 aa).

A mitochondrion-targeting transit peptide spans 1-23; the sequence is MISKLKPQFMFLPKKHILSYCRK. The helical transmembrane segment at 143–163 threads the bilayer; that stretch reads IIFLLFVSLFGLYGFFESYNP. Residues 225-229 and T249 each bind FMN; that span reads AGFDK. Residue K229 coordinates substrate. Residues 274–278 and N342 contribute to the substrate site; that span reads NSCGF. N342 is an FMN binding site. Catalysis depends on S345, which acts as the Nucleophile. N347 provides a ligand contact to substrate. K429 is an FMN binding site. Position 458–459 (458–459) interacts with substrate; the sequence is NT. FMN-binding positions include 477–478, 505–507, and 528–529; these read SG, SGG, and YS.

It belongs to the dihydroorotate dehydrogenase family. Type 2 subfamily. As to quaternary structure, monomer. The cofactor is FMN.

The protein localises to the mitochondrion inner membrane. It catalyses the reaction (S)-dihydroorotate + a quinone = orotate + a quinol. Its pathway is pyrimidine metabolism; UMP biosynthesis via de novo pathway; orotate from (S)-dihydroorotate (quinone route): step 1/1. Catalyzes the conversion of dihydroorotate to orotate with quinone as electron acceptor. The polypeptide is Dihydroorotate dehydrogenase (quinone), mitochondrial (Plasmodium falciparum (isolate 3D7)).